Here is a 118-residue protein sequence, read N- to C-terminus: Mating-type P-specific polypeptide Pc (118 aa).

Positions 29 to 97 form a DNA-binding region, HMG box; that stretch reads KTTIYKNGFM…VRKQIAKLER (69 aa).

The protein localises to the nucleus. Mating type proteins are sequence specific DNA-binding proteins that act as master switches in yeast differentiation by controlling gene expression in a cell type-specific fashion. Required for conjugation and efficient meiosis. This Schizosaccharomyces kambucha (Fission yeast) protein is Mating-type P-specific polypeptide Pc (matPc).